The chain runs to 209 residues: Small ribosomal subunit protein uS4 (209 aa).

The S4 RNA-binding domain occupies 98–159 (RRLDSAVYRL…KSRKITRIND (62 aa)).

This sequence belongs to the universal ribosomal protein uS4 family. In terms of assembly, part of the 30S ribosomal subunit. Contacts protein S5. The interaction surface between S4 and S5 is involved in control of translational fidelity.

In terms of biological role, one of the primary rRNA binding proteins, it binds directly to 16S rRNA where it nucleates assembly of the body of the 30S subunit. With S5 and S12 plays an important role in translational accuracy. This chain is Small ribosomal subunit protein uS4, found in Syntrophotalea carbinolica (strain DSM 2380 / NBRC 103641 / GraBd1) (Pelobacter carbinolicus).